The chain runs to 164 residues: Peptidyl-prolyl cis-trans isomerase A (164 aa).

An N-acetylmethionine modification is found at M1. V2 bears the N-acetylvaline; in Peptidyl-prolyl cis-trans isomerase A, N-terminally processed mark. In terms of domain architecture, PPIase cyclophilin-type spans F7–Q163. Position 28 is an N6-acetyllysine; alternate (K28). K28 participates in a covalent cross-link: Glycyl lysine isopeptide (Lys-Gly) (interchain with G-Cter in SUMO2); alternate. A Glycyl lysine isopeptide (Lys-Gly) (interchain with G-Cter in ubiquitin); alternate cross-link involves residue K28. Residues K44 and K76 each carry the N6-acetyllysine modification. Residue S77 is modified to Phosphoserine. N6-acetyllysine; alternate is present on K82. K82 is covalently cross-linked (Glycyl lysine isopeptide (Lys-Gly) (interchain with G-Cter in SUMO2); alternate). T93 carries the phosphothreonine modification. N-linked (GlcNAc...) asparagine glycosylation is present at N108. Residues K125 and K133 each carry the N6-acetyllysine modification.

This sequence belongs to the cyclophilin-type PPIase family. PPIase A subfamily. In terms of assembly, interacts with protein phosphatase PPP3CA/calcineurin A. Interacts with isoform 2 of BSG/CD147. Interacts with FOXO1; the interaction promotes FOXO1 dephosphorylation, nuclear accumulation and transcriptional activity. Interacts with integrin ITGA2B:ITGB3; the interaction is ROS and peptidyl-prolyl cis-trans isomerase (PPIase) activity-dependent and is increased in the presence of thrombin. Interacts with MAP3K5. Interacts with TARDBP; the interaction is dependent on the RNA-binding activity of TARDBP and the PPIase activity of PPIA/CYPA and the acetylation of PPIA/CYPA at Lys-125 favors the interaction. Interacts with HNRNPA1, HNRNPA2B1, HNRNPC, RBMX, HNRNPK and HNRNPM. Post-translationally, acetylation at Lys-125 markedly inhibits catalysis of cis to trans isomerization. PPIA acetylation also antagonizes the immunosuppressive effects of cyclosporine by inhibiting the sequential steps of cyclosporine binding and calcineurin inhibition. Acetylation at Lys-125 favors the interaction with TARDBP.

The protein localises to the cytoplasm. The protein resides in the secreted. Its subcellular location is the nucleus. The catalysed reaction is [protein]-peptidylproline (omega=180) = [protein]-peptidylproline (omega=0). With respect to regulation, binds cyclosporin A (CsA). CsA mediates some of its effects via an inhibitory action on PPIase. Functionally, catalyzes the cis-trans isomerization of proline imidic peptide bonds in oligopeptides. Exerts a strong chemotactic effect on leukocytes partly through activation of one of its membrane receptors BSG/CD147, initiating a signaling cascade that culminates in MAPK/ERK activation. Activates endothelial cells (ECs) in a proinflammatory manner by stimulating activation of NF-kappa-B and ERK, JNK and p38 MAP-kinases and by inducing expression of adhesion molecules including SELE and VCAM1. Induces apoptosis in ECs by promoting the FOXO1-dependent expression of CCL2 and BCL2L11 which are involved in EC chemotaxis and apoptosis. In response to oxidative stress, initiates proapoptotic and antiapoptotic signaling in ECs via activation of NF-kappa-B and AKT1 and up-regulation of antiapoptotic protein BCL2. Negatively regulates MAP3K5/ASK1 kinase activity, autophosphorylation and oxidative stress-induced apoptosis mediated by MAP3K5/ASK1. Necessary for the assembly of TARDBP in heterogeneous nuclear ribonucleoprotein (hnRNP) complexes and regulates TARDBP binding to RNA UG repeats and TARDBP-dependent expression of HDAC6, ATG7 and VCP which are involved in clearance of protein aggregates. Plays an important role in platelet activation and aggregation. Regulates calcium mobilization and integrin ITGA2B:ITGB3 bidirectional signaling via increased ROS production as well as by facilitating the interaction between integrin and the cell cytoskeleton. Binds heparan sulfate glycosaminoglycans. This Oryctolagus cuniculus (Rabbit) protein is Peptidyl-prolyl cis-trans isomerase A (PPIA).